Here is a 387-residue protein sequence, read N- to C-terminus: Probable serine/threonine-protein kinase RIO1 homolog (387 aa).

The 347-residue stretch at 41–387 (VNLQGSLCTG…RYIGMKKRKN (347 aa)) folds into the Protein kinase domain. Residue lysine 91 participates in ATP binding. The Proton acceptor role is filled by aspartate 204. Residues asparagine 209 and aspartate 221 each coordinate Mg(2+). Catalysis depends on aspartate 221, which acts as the 4-aspartylphosphate intermediate. Residues 309–372 (EFGSTTDSDL…RASRISKKEK (64 aa)) are disordered. The segment covering 312-321 (STTDSDLSST) has biased composition (low complexity). Residues 361 to 372 (IRRASRISKKEK) are compositionally biased toward basic residues.

This sequence belongs to the protein kinase superfamily. RIO-type Ser/Thr kinase family. The cofactor is Mg(2+).

Its subcellular location is the cytoplasm. It catalyses the reaction L-seryl-[protein] + ATP = O-phospho-L-seryl-[protein] + ADP + H(+). It carries out the reaction L-threonyl-[protein] + ATP = O-phospho-L-threonyl-[protein] + ADP + H(+). The catalysed reaction is ATP + H2O = ADP + phosphate + H(+). Its function is as follows. Required for the final endonucleolytic cleavage at site D converting 20S pre-rRNA into the mature 18S rRNA. Required for the final steps of cytoplasmic maturation of the 40S ribosomal subunit. Despite the protein kinase domain is proposed to act predominantly as an ATPase. Has a role in the cell cycle where it is required for entrance into S-phase and in the control of the onset of anaphase. Appears to also be involved in the maintenance of chromosome stability and correct mitotic segregation. This is Probable serine/threonine-protein kinase RIO1 homolog (RIO1) from Encephalitozoon cuniculi (strain GB-M1) (Microsporidian parasite).